Consider the following 145-residue polypeptide: METSDELKQRIGDLSYEVTQHAATESPFTGEYDDFFEKGIYIDIVSGEVLFSSLDKFNSGCGWPAFSKPIENRMVTNHDDSSYGMRRVEVKSREAGSHLGHVFSDGPKEAGGLRYCINSAALKFIPYEQMEKEGYAQWLTLFDET.

Residues 4 to 127 (SDELKQRIGD…NSAALKFIPY (124 aa)) form the MsrB domain. Cys-116 functions as the Nucleophile in the catalytic mechanism.

It belongs to the MsrB Met sulfoxide reductase family.

It carries out the reaction L-methionyl-[protein] + [thioredoxin]-disulfide + H2O = L-methionyl-(R)-S-oxide-[protein] + [thioredoxin]-dithiol. The chain is Peptide methionine sulfoxide reductase MsrB from Streptococcus pyogenes serotype M18 (strain MGAS8232).